The primary structure comprises 605 residues: Elongation factor 4 (605 aa).

Positions 9–192 (HHIRNFCIIA…AIVKRVPAPS (184 aa)) constitute a tr-type G domain. GTP-binding positions include 21-26 (DHGKST) and 139-142 (NKID).

The protein belongs to the TRAFAC class translation factor GTPase superfamily. Classic translation factor GTPase family. LepA subfamily.

It is found in the cell inner membrane. The enzyme catalyses GTP + H2O = GDP + phosphate + H(+). Its function is as follows. Required for accurate and efficient protein synthesis under certain stress conditions. May act as a fidelity factor of the translation reaction, by catalyzing a one-codon backward translocation of tRNAs on improperly translocated ribosomes. Back-translocation proceeds from a post-translocation (POST) complex to a pre-translocation (PRE) complex, thus giving elongation factor G a second chance to translocate the tRNAs correctly. Binds to ribosomes in a GTP-dependent manner. The chain is Elongation factor 4 from Chlorobium phaeobacteroides (strain DSM 266 / SMG 266 / 2430).